The following is a 496-amino-acid chain: Glutamyl-tRNA(Gln) amidotransferase subunit B, organellar chromatophore (496 aa).

This sequence belongs to the GatB/GatE family. GatB subfamily. Subunit of the heterotrimeric GatCAB amidotransferase (AdT) complex, composed of A, B and C subunits.

The protein resides in the plastid. The protein localises to the organellar chromatophore. It carries out the reaction L-glutamyl-tRNA(Gln) + L-glutamine + ATP + H2O = L-glutaminyl-tRNA(Gln) + L-glutamate + ADP + phosphate + H(+). Allows the formation of correctly charged Gln-tRNA(Gln) through the transamidation of misacylated Glu-tRNA(Gln). The reaction takes place in the presence of glutamine and ATP through an activated gamma-phospho-Glu-tRNA(Gln). This chain is Glutamyl-tRNA(Gln) amidotransferase subunit B, organellar chromatophore, found in Paulinella chromatophora.